Reading from the N-terminus, the 152-residue chain is CASP-like protein 5C3 (152 aa).

At 1–17 (MVEVPGSVGTTASLSLR) the chain is on the cytoplasmic side. The helical transmembrane segment at 18–38 (LGQMVLAFGSLLFMTIGVRFY) threads the bilayer. Residues 39 to 42 (QFTA) are Extracellular-facing. Residues 43-63 (FCYLVTIMSLAIPWNLTLAMV) form a helical membrane-spanning segment. The Cytoplasmic segment spans residues 64–78 (DIYCVILQQPFQKPR). The helical transmembrane segment at 79 to 99 (ILLAISIGDWVVSVLALASAS) threads the bilayer. The Extracellular segment spans residues 100 to 128 (SAASVVDILRSNESSCPPTICNRYQFAAT). Asparagine 111 is a glycosylation site (N-linked (GlcNAc...) asparagine). A helical transmembrane segment spans residues 129–149 (LAFLTWFLSLSSSLFNLWLLP). Topologically, residues 150-152 (SLI) are cytoplasmic.

It belongs to the Casparian strip membrane proteins (CASP) family. In terms of assembly, homodimer and heterodimers. As to expression, expressed in the floral organ abscission zone and flower buds.

The protein resides in the cell membrane. The chain is CASP-like protein 5C3 from Arabidopsis thaliana (Mouse-ear cress).